Consider the following 225-residue polypeptide: NAD(P)H-quinone oxidoreductase subunit K, chloroplastic (225 aa).

4 residues coordinate [4Fe-4S] cluster: Cys-43, Cys-44, Cys-108, and Cys-139.

Belongs to the complex I 20 kDa subunit family. In terms of assembly, NDH is composed of at least 16 different subunits, 5 of which are encoded in the nucleus. [4Fe-4S] cluster serves as cofactor.

It is found in the plastid. The protein resides in the chloroplast thylakoid membrane. The catalysed reaction is a plastoquinone + NADH + (n+1) H(+)(in) = a plastoquinol + NAD(+) + n H(+)(out). The enzyme catalyses a plastoquinone + NADPH + (n+1) H(+)(in) = a plastoquinol + NADP(+) + n H(+)(out). Functionally, NDH shuttles electrons from NAD(P)H:plastoquinone, via FMN and iron-sulfur (Fe-S) centers, to quinones in the photosynthetic chain and possibly in a chloroplast respiratory chain. The immediate electron acceptor for the enzyme in this species is believed to be plastoquinone. Couples the redox reaction to proton translocation, and thus conserves the redox energy in a proton gradient. In Lepidium virginicum (Virginia pepperweed), this protein is NAD(P)H-quinone oxidoreductase subunit K, chloroplastic.